The chain runs to 276 residues: Extracellular metalloprotease 1 (276 aa).

Positions Met-1–Ala-18 are cleaved as a signal peptide. His-191 lines the Zn(2+) pocket. Glu-192 is an active-site residue. His-195 is a binding site for Zn(2+). A disordered region spans residues Gly-211–Ser-233. A disulfide bridge connects residues Cys-227 and Cys-253.

The protein belongs to the peptidase M43B family.

It localises to the secreted. Its function is as follows. Secreted metalloproteinase that allows assimilation of proteinaceous substrates. Pays a pivotal role as a pathogenicity determinant during infections and contributes to the ability of the pathogen to persist within the mammalian host. Digests an immunodominant cell surface antigen (SOWgp) and prevents host recognition of endospores during the phase of development when these fungal cells are most vulnerable to phagocytic cell defenses. The polypeptide is Extracellular metalloprotease 1 (MEP1) (Coccidioides posadasii (strain C735) (Valley fever fungus)).